Here is a 370-residue protein sequence, read N- to C-terminus: 4-hydroxy-3-methylbut-2-en-1-yl diphosphate synthase (flavodoxin) (370 aa).

[4Fe-4S] cluster contacts are provided by C270, C273, C305, and E312.

The protein belongs to the IspG family. It depends on [4Fe-4S] cluster as a cofactor.

It catalyses the reaction (2E)-4-hydroxy-3-methylbut-2-enyl diphosphate + oxidized [flavodoxin] + H2O + 2 H(+) = 2-C-methyl-D-erythritol 2,4-cyclic diphosphate + reduced [flavodoxin]. It functions in the pathway isoprenoid biosynthesis; isopentenyl diphosphate biosynthesis via DXP pathway; isopentenyl diphosphate from 1-deoxy-D-xylulose 5-phosphate: step 5/6. In terms of biological role, converts 2C-methyl-D-erythritol 2,4-cyclodiphosphate (ME-2,4cPP) into 1-hydroxy-2-methyl-2-(E)-butenyl 4-diphosphate. The sequence is that of 4-hydroxy-3-methylbut-2-en-1-yl diphosphate synthase (flavodoxin) from Hamiltonella defensa subsp. Acyrthosiphon pisum (strain 5AT).